A 153-amino-acid chain; its full sequence is Cell division protein SepF (153 aa).

The protein belongs to the SepF family. As to quaternary structure, homodimer. Interacts with FtsZ.

The protein resides in the cytoplasm. Cell division protein that is part of the divisome complex and is recruited early to the Z-ring. Probably stimulates Z-ring formation, perhaps through the cross-linking of FtsZ protofilaments. Its function overlaps with FtsA. The protein is Cell division protein SepF of Clostridium tetani (strain Massachusetts / E88).